A 178-amino-acid polypeptide reads, in one-letter code: ATP synthase subunit delta (178 aa).

It belongs to the ATPase delta chain family. As to quaternary structure, F-type ATPases have 2 components, F(1) - the catalytic core - and F(0) - the membrane proton channel. F(1) has five subunits: alpha(3), beta(3), gamma(1), delta(1), epsilon(1). F(0) has three main subunits: a(1), b(2) and c(10-14). The alpha and beta chains form an alternating ring which encloses part of the gamma chain. F(1) is attached to F(0) by a central stalk formed by the gamma and epsilon chains, while a peripheral stalk is formed by the delta and b chains.

It localises to the cell inner membrane. Its function is as follows. F(1)F(0) ATP synthase produces ATP from ADP in the presence of a proton or sodium gradient. F-type ATPases consist of two structural domains, F(1) containing the extramembraneous catalytic core and F(0) containing the membrane proton channel, linked together by a central stalk and a peripheral stalk. During catalysis, ATP synthesis in the catalytic domain of F(1) is coupled via a rotary mechanism of the central stalk subunits to proton translocation. In terms of biological role, this protein is part of the stalk that links CF(0) to CF(1). It either transmits conformational changes from CF(0) to CF(1) or is implicated in proton conduction. The protein is ATP synthase subunit delta of Aromatoleum aromaticum (strain DSM 19018 / LMG 30748 / EbN1) (Azoarcus sp. (strain EbN1)).